The primary structure comprises 194 residues: GTP cyclohydrolase-2 (194 aa).

50–54 (RIHSE) contributes to the GTP binding site. Residues Cys55, Cys66, and Cys68 each contribute to the Zn(2+) site. Residues 94-96 (EGR) and Thr116 each bind GTP. Asp128 serves as the catalytic Proton acceptor. The Nucleophile role is filled by Arg130. GTP is bound by residues Thr151 and Lys156.

The protein belongs to the GTP cyclohydrolase II family. It depends on Zn(2+) as a cofactor.

The enzyme catalyses GTP + 4 H2O = 2,5-diamino-6-hydroxy-4-(5-phosphoribosylamino)-pyrimidine + formate + 2 phosphate + 3 H(+). Its pathway is cofactor biosynthesis; riboflavin biosynthesis; 5-amino-6-(D-ribitylamino)uracil from GTP: step 1/4. Its function is as follows. Catalyzes the conversion of GTP to 2,5-diamino-6-ribosylamino-4(3H)-pyrimidinone 5'-phosphate (DARP), formate and pyrophosphate. This Helicobacter hepaticus (strain ATCC 51449 / 3B1) protein is GTP cyclohydrolase-2.